Consider the following 669-residue polypeptide: Very long-chain fatty acid transport protein (669 aa).

The Cytoplasmic portion of the chain corresponds to 1-5; it reads MSPIQ. Residues 6–26 form a helical membrane-spanning segment; sequence VVVFALSRIFLLLFRLIKLII. Residues 27–148 are Extracellular-facing; the sequence is TPIQKSLGYL…YVAIDCTNKP (122 aa). The chain crosses the membrane as a helical span at residues 149–169; the sequence is LFVFLWLSLWNIGAIPAFLNY. Residues 170–270 are Cytoplasmic-facing; it reads NTKGTPLVHS…TGLPKSAIMS (101 aa). 256-267 lines the ATP pocket; the sequence is YTSGTTGLPKSA. Residues 271–339 lie within the membrane without spanning it; that stretch reads WRKSSVGCQV…FWKQVYLTGA (69 aa). Over 340–669 the chain is Cytoplasmic; the sequence is THIQYVGEVC…EAIDAQTIKL (330 aa). The short motif at 501-551 is the FACS element; it reads DAWYRCGDLLKADEYGLWYFLDRMGDTFRWKSENVSTTEVEDQLTASNKEQ. Residues 667–669 carry the C-terminal peroxisome targeting signal (PTS1) motif; it reads IKL.

This sequence belongs to the ATP-dependent AMP-binding enzyme family. In terms of assembly, interacts with fatty acyl-CoA synthetases FAA1 and FAA4.

Its subcellular location is the lipid droplet. It localises to the cell membrane. The protein resides in the peroxisome membrane. The protein localises to the peroxisome. The enzyme catalyses a very long-chain fatty acid + ATP + CoA = a very long-chain fatty acyl-CoA + AMP + diphosphate. It catalyses the reaction tetracosanoate + ATP + CoA = tetracosanoyl-CoA + AMP + diphosphate. Acyl-CoA synthetase required for both the import of long chain fatty acids (LCFAs) (C14-C18) and the activation very long chain fatty acids (VLCFAs) (C20-C26) by esterification of the fatty acids into metabolically active CoA-thioesters for subsequent degradation or incorporation into phospholipids. The transport and fatty acyl-CoA synthetase activities are genetically separable and are thus independent activities. Esterifies VLCFAs in the peroxisome matrix. The VLCFAs are actively transported into peroxisomes by a PXA1-PXA2 heterodimeric transporter in the peroxisomal membrane. The polypeptide is Very long-chain fatty acid transport protein (FAT1) (Saccharomyces cerevisiae (strain ATCC 204508 / S288c) (Baker's yeast)).